A 272-amino-acid chain; its full sequence is Undecaprenyl-diphosphatase (272 aa).

The next 7 helical transmembrane spans lie at 6-26, 45-65, 92-112, 115-135, 189-209, 221-241, and 251-271; these read SLLI…LPVS, AKTF…VMFW, THIL…HDVI, LFYP…LLAA, YAAS…ATVL, ADVP…LIAI, and ISFI…YMVF.

The protein belongs to the UppP family.

It localises to the cell inner membrane. The enzyme catalyses di-trans,octa-cis-undecaprenyl diphosphate + H2O = di-trans,octa-cis-undecaprenyl phosphate + phosphate + H(+). In terms of biological role, catalyzes the dephosphorylation of undecaprenyl diphosphate (UPP). Confers resistance to bacitracin. This is Undecaprenyl-diphosphatase from Pectobacterium atrosepticum (strain SCRI 1043 / ATCC BAA-672) (Erwinia carotovora subsp. atroseptica).